Consider the following 326-residue polypeptide: Melanocortin receptor 4 (326 aa).

Residues 1–14 show a composition bias toward basic residues; it reads MNTSHHHGLHHSFR. Residues 1 to 31 are disordered; sequence MNTSHHHGLHHSFRNHSQGALPVGKPSHGDR. Over 1–46 the chain is Extracellular; the sequence is MNTSHHHGLHHSFRNHSQGALPVGKPSHGDRGSASGCYEQLLISTE. Asparagine 2 and asparagine 15 each carry an N-linked (GlcNAc...) asparagine glycan. The helical transmembrane segment at 47–67 threads the bilayer; that stretch reads IFLTLGLVSLLENILVIAAIV. Residues 68 to 71 are Cytoplasmic-facing; it reads KNKN. A helical transmembrane segment spans residues 72-92; that stretch reads LHSPMYFFICSLAVADLLVSV. Residues 93–121 are Extracellular-facing; the sequence is SNASETVVMALITGGNLTNRESIIKNMDN. 2 N-linked (GlcNAc...) asparagine glycosylation sites follow: asparagine 94 and asparagine 108. The helical transmembrane segment at 122–142 threads the bilayer; that stretch reads VFDSMICSSLLASIWSLLAIA. The Cytoplasmic segment spans residues 143 to 163; that stretch reads VDRYITIFYALRYHNIMTQRR. A helical membrane pass occupies residues 164-184; it reads AGTIITCIWTFCTVSGVLFIV. The Extracellular segment spans residues 185–190; that stretch reads YSESTT. Residues 191-211 traverse the membrane as a helical segment; that stretch reads VLICLISMFFTMLALMASLYV. Residues 212 to 246 are Cytoplasmic-facing; it reads HMFLLARLHMKRIAALPGNGPIWQAANMKGAITIT. Residues 247 to 267 form a helical membrane-spanning segment; the sequence is ILLGVFVVCWAPFFLHLILMI. The Extracellular segment spans residues 268–281; sequence SCPRNPYCVCFMSH. A helical transmembrane segment spans residues 282 to 302; the sequence is FNMYLILIMCNSVIDPLIYAF. Residues 303–326 lie on the Cytoplasmic side of the membrane; that stretch reads RSQEMRKTFKEICCCWYGLASLCV. The S-palmitoyl cysteine moiety is linked to residue cysteine 316.

Belongs to the G-protein coupled receptor 1 family. Homodimer; disulfide-linked, also forms higher order oligomers. Interacts with mrap2a; decreasing ligand-sensitivity. Interacts with mrap2b; increasing ligand-sensitivity and generation of cAMP.

The protein localises to the cell membrane. In terms of biological role, receptor specific to the heptapeptide core common to adrenocorticotropic hormone and alpha-, beta-, and gamma-MSH. Plays a central role in energy homeostasis and somatic growth. This receptor is mediated by G proteins that stimulate adenylate cyclase (cAMP). The polypeptide is Melanocortin receptor 4 (mc4r) (Danio rerio (Zebrafish)).